A 706-amino-acid chain; its full sequence is K(+)-insensitive pyrophosphate-energized proton pump (706 aa).

The next 5 membrane-spanning stretches (helical) occupy residues 1-21, 62-82, 83-103, 129-149, and 164-184; these read MTAL…AIWA, VVIF…GFAI, GAIL…RANV, LLVA…LIHF, and VALG…GGIF. Position 186 (Lys186) interacts with substrate. 4 residues coordinate Mg(2+): Asp189, Asp193, Asn216, and Asp219. The next 6 membrane-spanning stretches (helical) occupy residues 231–251, 263–283, 300–320, 330–350, 393–413, and 414–434; these read LFET…IFFG, TLPL…TFFV, IATG…LIGF, GLAL…IIWI, IVII…GIAI, and ATTT…FGPV. Asp436 serves as a coordination point for Mg(2+). A run of 4 helical transmembrane segments spans residues 467-487, 516-536, 585-605, and 616-636; these read AVTK…LFAA, YVVV…AMGM, IIPS…IYAI, and AFSA…FVAI. Residues Asp646, Asp672, and Asp676 each coordinate Ca(2+). Lys679 serves as a coordination point for substrate. A helical membrane pass occupies residues 685-705; that stretch reads AVNPMIKITNIVALLLLAILA.

This sequence belongs to the H(+)-translocating pyrophosphatase (TC 3.A.10) family. K(+)-insensitive subfamily. As to quaternary structure, homodimer. Requires Mg(2+) as cofactor.

It is found in the cell inner membrane. The enzyme catalyses diphosphate + H2O + H(+)(in) = 2 phosphate + 2 H(+)(out). Its function is as follows. Proton pump that utilizes the energy of pyrophosphate hydrolysis as the driving force for proton movement across the membrane. Generates a proton motive force. The protein is K(+)-insensitive pyrophosphate-energized proton pump of Rhodopseudomonas palustris (strain ATCC BAA-98 / CGA009).